We begin with the raw amino-acid sequence, 819 residues long: Leucine--tRNA ligase (819 aa).

The 'HIGH' region motif lies at 36 to 46 (PYPSGKIHMGH). The 'KMSKS' region signature appears at 586–590 (KMSKS). K589 is a binding site for ATP.

It belongs to the class-I aminoacyl-tRNA synthetase family.

It is found in the cytoplasm. It catalyses the reaction tRNA(Leu) + L-leucine + ATP = L-leucyl-tRNA(Leu) + AMP + diphosphate. This Wolbachia pipientis subsp. Culex pipiens (strain wPip) protein is Leucine--tRNA ligase.